Reading from the N-terminus, the 606-residue chain is Protein spire homolog 2 (606 aa).

The 199-residue stretch at L21–L219 folds into the KIND domain. The interval K147–I181 is disordered. Residues Q162 to E175 are compositionally biased toward acidic residues. 2 WH2 domains span residues Q263–V277 and L357–V374. 2 disordered regions span residues D438 to S464 and C517 to G537. The span at V445 to S464 shows a compositional bias: basic and acidic residues. The interval L554–E574 is spir-box.

Belongs to the spire family.

It is found in the cytoplasm. Its subcellular location is the cytoskeleton. It localises to the cytosol. The protein localises to the cell membrane. The protein resides in the cytoplasmic vesicle membrane. In terms of biological role, acts as an actin nucleation factor, remains associated with the slow-growing pointed end of the new filament. Involved in intracellular vesicle transport along actin fibers, providing a novel link between actin cytoskeleton dynamics and intracellular transport. Required for asymmetric spindle positioning and asymmetric cell division during oocyte meiosis. Required for normal formation of the cleavage furrow and for polar body extrusion during female germ cell meiosis. Also acts in the nucleus: together with SPIRE1 and SPIRE2, promotes assembly of nuclear actin filaments in response to DNA damage in order to facilitate movement of chromatin and repair factors after DNA damage. The sequence is that of Protein spire homolog 2 (spire2) from Danio rerio (Zebrafish).